The chain runs to 486 residues: Ribulose bisphosphate carboxylase large chain (486 aa).

Asn126 and Thr176 together coordinate substrate. The Proton acceptor role is filled by Lys178. Lys180 contacts substrate. The Mg(2+) site is built by Lys204, Asp206, and Glu207. Lys204 carries the N6-carboxylysine modification. The active-site Proton acceptor is His296. Arg297, His329, and Ser381 together coordinate substrate.

Belongs to the RuBisCO large chain family. Type I subfamily. Heterohexadecamer of 8 large chains and 8 small chains. It depends on Mg(2+) as a cofactor.

It catalyses the reaction 2 (2R)-3-phosphoglycerate + 2 H(+) = D-ribulose 1,5-bisphosphate + CO2 + H2O. It carries out the reaction D-ribulose 1,5-bisphosphate + O2 = 2-phosphoglycolate + (2R)-3-phosphoglycerate + 2 H(+). In terms of biological role, ruBisCO catalyzes two reactions: the carboxylation of D-ribulose 1,5-bisphosphate, the primary event in carbon dioxide fixation, as well as the oxidative fragmentation of the pentose substrate. Both reactions occur simultaneously and in competition at the same active site. This is Ribulose bisphosphate carboxylase large chain from Rhizobium meliloti (strain 1021) (Ensifer meliloti).